Here is a 320-residue protein sequence, read N- to C-terminus: Ferrochelatase (320 aa).

Fe cation contacts are provided by H194 and E275.

Belongs to the ferrochelatase family.

It localises to the cytoplasm. It carries out the reaction heme b + 2 H(+) = protoporphyrin IX + Fe(2+). The protein operates within porphyrin-containing compound metabolism; protoheme biosynthesis; protoheme from protoporphyrin-IX: step 1/1. Functionally, catalyzes the ferrous insertion into protoporphyrin IX. The protein is Ferrochelatase of Xylella fastidiosa (strain 9a5c).